The sequence spans 69 residues: Cytochrome c oxidase subunit 8A, mitochondrial (69 aa).

A mitochondrion-targeting transit peptide spans 1–25; it reads MSVLTPLLLRGLAGSARRLPVPRAQ. The short motif at 2-19 is the SIFI-degron element; the sequence is SVLTPLLLRGLAGSARRL. Residues 26–36 are Mitochondrial matrix-facing; sequence IHSKPPREQLG. The helical transmembrane segment at 37 to 60 threads the bilayer; sequence TMDVAIGITSCFLCFLLPAGWVLS. Over 61-69 the chain is Mitochondrial intermembrane; that stretch reads HLESYKKRE.

It belongs to the cytochrome c oxidase VIII family. In terms of assembly, component of the cytochrome c oxidase (complex IV, CIV), a multisubunit enzyme composed of 14 subunits. The complex is composed of a catalytic core of 3 subunits MT-CO1, MT-CO2 and MT-CO3, encoded in the mitochondrial DNA, and 11 supernumerary subunits COX4I, COX5A, COX5B, COX6A, COX6B, COX6C, COX7A, COX7B, COX7C, COX8 and NDUFA4, which are encoded in the nuclear genome. The complex exists as a monomer or a dimer and forms supercomplexes (SCs) in the inner mitochondrial membrane with NADH-ubiquinone oxidoreductase (complex I, CI) and ubiquinol-cytochrome c oxidoreductase (cytochrome b-c1 complex, complex III, CIII), resulting in different assemblies (supercomplex SCI(1)III(2)IV(1) and megacomplex MCI(2)III(2)IV(2)). In terms of processing, in response to mitochondrial stress, the precursor protein is ubiquitinated by the SIFI complex in the cytoplasm before mitochondrial import, leading to its degradation. Within the SIFI complex, UBR4 initiates ubiquitin chain that are further elongated or branched by KCMF1.

The protein resides in the mitochondrion inner membrane. It functions in the pathway energy metabolism; oxidative phosphorylation. Functionally, component of the cytochrome c oxidase, the last enzyme in the mitochondrial electron transport chain which drives oxidative phosphorylation. The respiratory chain contains 3 multisubunit complexes succinate dehydrogenase (complex II, CII), ubiquinol-cytochrome c oxidoreductase (cytochrome b-c1 complex, complex III, CIII) and cytochrome c oxidase (complex IV, CIV), that cooperate to transfer electrons derived from NADH and succinate to molecular oxygen, creating an electrochemical gradient over the inner membrane that drives transmembrane transport and the ATP synthase. Cytochrome c oxidase is the component of the respiratory chain that catalyzes the reduction of oxygen to water. Electrons originating from reduced cytochrome c in the intermembrane space (IMS) are transferred via the dinuclear copper A center (CU(A)) of subunit 2 and heme A of subunit 1 to the active site in subunit 1, a binuclear center (BNC) formed by heme A3 and copper B (CU(B)). The BNC reduces molecular oxygen to 2 water molecules using 4 electrons from cytochrome c in the IMS and 4 protons from the mitochondrial matrix. This is Cytochrome c oxidase subunit 8A, mitochondrial (COX8A) from Carlito syrichta (Philippine tarsier).